Consider the following 173-residue polypeptide: Cytochrome c-type biogenesis protein CcmE (173 aa).

Residues 1 to 7 (MTRKSRR) are Cytoplasmic-facing. Residues 8–28 (LILIAACGAVLALALGLILSA) form a helical; Signal-anchor for type II membrane protein membrane-spanning segment. Over 29 to 173 (MSGSIVFFRS…DATLGQRSER (145 aa)) the chain is Periplasmic. 2 residues coordinate heme: His-122 and Tyr-126. The disordered stretch occupies residues 134-173 (ALKAQGRWQEGGGKDASKAAPKDAAKPETADATLGQRSER). The segment covering 145-162 (GGKDASKAAPKDAAKPET) has biased composition (basic and acidic residues).

Belongs to the CcmE/CycJ family.

It localises to the cell inner membrane. Its function is as follows. Heme chaperone required for the biogenesis of c-type cytochromes. Transiently binds heme delivered by CcmC and transfers the heme to apo-cytochromes in a process facilitated by CcmF and CcmH. This chain is Cytochrome c-type biogenesis protein CcmE, found in Methylorubrum extorquens (strain CM4 / NCIMB 13688) (Methylobacterium extorquens).